A 140-amino-acid chain; its full sequence is uncharacterized protein (140 aa).

The VOC domain occupies 4-127 (TLTHLALHVP…AGNYVEFSYG (124 aa)).

This is an uncharacterized protein from Pseudomonas aeruginosa (strain ATCC 15692 / DSM 22644 / CIP 104116 / JCM 14847 / LMG 12228 / 1C / PRS 101 / PAO1).